The sequence spans 302 residues: Putative beta-glucosidase 17 (302 aa).

Residues 1–27 (MMAVAAATRIAVVVVAALAALAPGARG) form the signal peptide. A beta-D-glucoside is bound by residues Q47, H149, and 194–195 (NE). Residue E195 is the Proton donor of the active site. A disulfide bridge connects residues C214 and C221. N-linked (GlcNAc...) asparagine glycosylation occurs at N274.

The protein belongs to the glycosyl hydrolase 1 family.

It carries out the reaction Hydrolysis of terminal, non-reducing beta-D-glucosyl residues with release of beta-D-glucose.. In Oryza sativa subsp. japonica (Rice), this protein is Putative beta-glucosidase 17 (BGLU17).